Reading from the N-terminus, the 61-residue chain is Small ribosomal subunit protein uS14 (61 aa).

Zn(2+) contacts are provided by cysteine 24, cysteine 27, cysteine 40, and cysteine 43.

Belongs to the universal ribosomal protein uS14 family. Zinc-binding uS14 subfamily. Part of the 30S ribosomal subunit. Contacts proteins S3 and S10. Requires Zn(2+) as cofactor.

Binds 16S rRNA, required for the assembly of 30S particles and may also be responsible for determining the conformation of the 16S rRNA at the A site. This is Small ribosomal subunit protein uS14 from Roseiflexus castenholzii (strain DSM 13941 / HLO8).